A 179-amino-acid chain; its full sequence is NADH-quinone oxidoreductase subunit B (179 aa).

Cys-52, Cys-53, Cys-117, and Cys-147 together coordinate [4Fe-4S] cluster.

This sequence belongs to the complex I 20 kDa subunit family. NDH-1 is composed of 14 different subunits. Subunits NuoB, C, D, E, F, and G constitute the peripheral sector of the complex. The cofactor is [4Fe-4S] cluster.

The protein resides in the cell inner membrane. It carries out the reaction a quinone + NADH + 5 H(+)(in) = a quinol + NAD(+) + 4 H(+)(out). Functionally, NDH-1 shuttles electrons from NADH, via FMN and iron-sulfur (Fe-S) centers, to quinones in the respiratory chain. The immediate electron acceptor for the enzyme in this species is believed to be ubiquinone. Couples the redox reaction to proton translocation (for every two electrons transferred, four hydrogen ions are translocated across the cytoplasmic membrane), and thus conserves the redox energy in a proton gradient. This Ehrlichia chaffeensis (strain ATCC CRL-10679 / Arkansas) protein is NADH-quinone oxidoreductase subunit B.